Here is a 396-residue protein sequence, read N- to C-terminus: MGKNQPGYFGEFGGRYAPEILTEALEELESTYQKLKKSKKFKKELEFYLQNYVGRPSPLTYAERLTKQWGGARIWLKREDLNHTGAHKINNAIGQALIAKFMGKKRIIAETGAGQHGLATATVGAMFGMETVVYMGAVDVERQNLNAKKIEMLGAKILPVTAGEATLKEATSEAMRDWALNVSTTHYIVGSAIGPHPFPTIVRDLQSIIGKEARSQFKKRNHNLPHAIVACVGGGSNAIGMFHAFLKDKHVAIYGAEAGGLGPKPGEHSATLTYGKTGFLHGTKTLIIQDEAGQIVPAHSVSAGLDYPGVGPEHAYLSQTKRVDYRMVTDEQALDCFLEVTRVEGIIPALETAHAFYVARDVAKDLGKKKDLIICLSGRGDKDVTEVLRILGERSK.

Lysine 88 is modified (N6-(pyridoxal phosphate)lysine).

This sequence belongs to the TrpB family. Tetramer of two alpha and two beta chains. Pyridoxal 5'-phosphate is required as a cofactor.

The enzyme catalyses (1S,2R)-1-C-(indol-3-yl)glycerol 3-phosphate + L-serine = D-glyceraldehyde 3-phosphate + L-tryptophan + H2O. The protein operates within amino-acid biosynthesis; L-tryptophan biosynthesis; L-tryptophan from chorismate: step 5/5. Its function is as follows. The beta subunit is responsible for the synthesis of L-tryptophan from indole and L-serine. The protein is Tryptophan synthase beta chain of Leptospira biflexa serovar Patoc (strain Patoc 1 / Ames).